The chain runs to 122 residues: Large ribosomal subunit protein bL12 (122 aa).

This sequence belongs to the bacterial ribosomal protein bL12 family. Homodimer. Part of the ribosomal stalk of the 50S ribosomal subunit. Forms a multimeric L10(L12)X complex, where L10 forms an elongated spine to which 2 to 4 L12 dimers bind in a sequential fashion. Binds GTP-bound translation factors.

Forms part of the ribosomal stalk which helps the ribosome interact with GTP-bound translation factors. Is thus essential for accurate translation. This chain is Large ribosomal subunit protein bL12, found in Lacticaseibacillus casei (strain BL23) (Lactobacillus casei).